The chain runs to 175 residues: Large ribosomal subunit protein uL18 (175 aa).

This sequence belongs to the universal ribosomal protein uL18 family. As to quaternary structure, part of the 50S ribosomal subunit. Contacts the 5S and 23S rRNAs.

Its function is as follows. This is one of the proteins that bind and probably mediate the attachment of the 5S RNA into the large ribosomal subunit, where it forms part of the central protuberance. In Methanoculleus marisnigri (strain ATCC 35101 / DSM 1498 / JR1), this protein is Large ribosomal subunit protein uL18.